The following is a 91-amino-acid chain: Putative regulatory protein PTH_1796 (91 aa).

This sequence belongs to the RemA family.

The chain is Putative regulatory protein PTH_1796 from Pelotomaculum thermopropionicum (strain DSM 13744 / JCM 10971 / SI).